The primary structure comprises 256 residues: Protein LIKE COV 1 (256 aa).

Residues 1 to 10 (MANRERDREL) are compositionally biased toward basic and acidic residues. A disordered region spans residues 1–39 (MANRERDRELLIPVADFGDKDDGSSSKPSSSSSASSSHQ). Topologically, residues 1–60 (MANRERDRELLIPVADFGDKDDGSSSKPSSSSSASSSHQSGHETLSLFIRGWASKKFMTG) are cytoplasmic. The segment covering 25 to 39 (SSKPSSSSSASSSHQ) has biased composition (low complexity). The helical transmembrane segment at 61–81 (CVILLPIAVTFYTTWWFIHFV) threads the bilayer. At 82–93 (DGFFSPIYALLG) the chain is on the extracellular side. Residues 94-114 (INIFGFGFLTSIAFIFLVGVF) form a helical membrane-spanning segment. Topologically, residues 115–256 (MSSWLGASVL…KPLASIGNES (142 aa)) are cytoplasmic.

It belongs to the plant COV1 protein family. In terms of tissue distribution, expressed at low levels in flowers, stems, roots and leaves.

It is found in the membrane. In Arabidopsis thaliana (Mouse-ear cress), this protein is Protein LIKE COV 1.